The following is a 111-amino-acid chain: Nucleoid-associated protein Fphi_0115 (111 aa).

Residues 1–27 form a disordered region; the sequence is MNFDMSKLMQQAQKMQEQMKKAQQERE. The span at 17–27 shows a compositional bias: basic and acidic residues; the sequence is EQMKKAQQERE.

Belongs to the YbaB/EbfC family. In terms of assembly, homodimer.

It localises to the cytoplasm. It is found in the nucleoid. In terms of biological role, binds to DNA and alters its conformation. May be involved in regulation of gene expression, nucleoid organization and DNA protection. In Francisella philomiragia subsp. philomiragia (strain ATCC 25017 / CCUG 19701 / FSC 153 / O#319-036), this protein is Nucleoid-associated protein Fphi_0115.